A 351-amino-acid polypeptide reads, in one-letter code: Protein-glutamate methylesterase/protein-glutamine glutaminase 2 (351 aa).

Positions 4-121 constitute a Response regulatory domain; it reads KVLVVDDSAL…PQDFNEYQDL (118 aa). Residue Asp55 is modified to 4-aspartylphosphate. The region spanning 156–348 is the CheB-type methylesterase domain; sequence RVINTQLVAI…DKMLNYLASL (193 aa). Active-site residues include Ser168, His194, and Asp290.

It belongs to the CheB family. In terms of processing, phosphorylated by CheA. Phosphorylation of the N-terminal regulatory domain activates the methylesterase activity.

It localises to the cytoplasm. It carries out the reaction [protein]-L-glutamate 5-O-methyl ester + H2O = L-glutamyl-[protein] + methanol + H(+). It catalyses the reaction L-glutaminyl-[protein] + H2O = L-glutamyl-[protein] + NH4(+). Functionally, involved in chemotaxis. Part of a chemotaxis signal transduction system that modulates chemotaxis in response to various stimuli. Catalyzes the demethylation of specific methylglutamate residues introduced into the chemoreceptors (methyl-accepting chemotaxis proteins or MCP) by CheR. Also mediates the irreversible deamidation of specific glutamine residues to glutamic acid. This chain is Protein-glutamate methylesterase/protein-glutamine glutaminase 2, found in Shewanella sp. (strain MR-4).